We begin with the raw amino-acid sequence, 176 residues long: Caltractin (176 aa).

Residues 1–27 (MNRAAIAAGKPSGSISTGKPRRKTRAE) are disordered. 4 consecutive EF-hand domains span residues 31–66 (EMKHEIREAFDLFDADRSGRIDFHELKVAMRALGFD), 67–102 (VKKEEIQRIMNEYDRDQLGEITFQDFEEVMIEKISN), 104–139 (DPTEEILKAFRLFDDDATGRISLKNLRRVAKELSEN), and 140–175 (ISDEELLAMIQEFDRDGDGEIDEEDFIAILRSTSAF). Ca(2+) is bound by residues Asp-44, Asp-46, Ser-48, Arg-50, and Glu-55. 5 residues coordinate Ca(2+): Asp-153, Asp-155, Asp-157, Glu-159, and Asp-164.

Belongs to the centrin family. As to quaternary structure, monomer.

It is found in the cytoplasm. It localises to the cytoskeleton. Its subcellular location is the microtubule organizing center. The protein resides in the centrosome. Functionally, plays a fundamental role in microtubule-organizing center structure and function. In Giardia intestinalis (Giardia lamblia), this protein is Caltractin (CAL).